Consider the following 642-residue polypeptide: Tigger transposable element derived 5 (642 aa).

Positions 1–54 are disordered; the sequence is MYPASPPAGPALHPVPHRARLPQPRCLAEPPRSPAPGPGSTARPPPPPAPGPRP. A compositionally biased stretch (pro residues) spans 31 to 53; sequence PRSPAPGPGSTARPPPPPAPGPR. In terms of domain architecture, HTH psq-type spans 57-108; the sequence is AVKMTFRKAYSIKDKLQAIERVKGGERQASVCRDFGVPGGTLRGWLKDEPKL. 2 DNA-binding regions (H-T-H motif) span residues 84–104 and 155–188; these read QASVCRDFGVPGGTLRGWLKD and PVIQAQAEAFARQIYGPECTFKASHGWFWRWQKR. The HTH CENPB-type domain maps to 122-195; it reads QRKKMRLANE…QKRHGISSQR (74 aa). The segment at 202–238 is disordered; sequence SPVAGPAPVKEEPAQSPGAVLVPDGAPATLPHSEGGY. In terms of domain architecture, DDE-1 spans 240 to 365; that stretch reads DEQIYNANVT…CLQQKAVLLV (126 aa). 2 disordered regions span residues 375 to 400 and 548 to 581; these read TSMPPLEESEETPRQCQPELLGSPEE and GCREEVAPAAPPSPASLPSSIGAGEEEEEATEQG.

Belongs to the tigger transposable element derived protein family.

The protein localises to the nucleus. The polypeptide is Tigger transposable element derived 5 (Tigd5) (Mus musculus (Mouse)).